The chain runs to 200 residues: uncharacterized protein (200 aa).

Residues 149–200 are disordered; sequence APDPGGSVATEEVLRSDDRDSHTQDSASEWPEGNDSVGSAAMRIDLSRIGGT. Residues 160 to 171 show a composition bias toward basic and acidic residues; sequence EVLRSDDRDSHT.

It to A.tumefaciens Ti plasmid conjugal transfer region I ORFR2 and ORFR3.

This is an uncharacterized protein from Sinorhizobium fredii (strain NBRC 101917 / NGR234).